A 747-amino-acid polypeptide reads, in one-letter code: Superkiller protein 7 (747 aa).

The tract at residues 14–51 is disordered; that stretch reads KSKGLLSADQSHSTSKSASLLERLHKNRETKDNNAETK. A compositionally biased stretch (polar residues) spans 21 to 31; sequence ADQSHSTSKSA. Over residues 35-51 the composition is skewed to basic and acidic residues; that stretch reads ERLHKNRETKDNNAETK. S88 and S90 each carry phosphoserine. The disordered stretch occupies residues 89–117; that stretch reads NSDLEKQGKSVTLDSKENELPTKRKSPDD. In terms of domain architecture, tr-type G spans 265–503; it reads PLNLTCLFLG…YVPEWYEGPT (239 aa). The segment at 274-281 is G1; the sequence is GDTNAGKS. 274 to 281 provides a ligand contact to GTP; sequence GDTNAGKS. The G2 stretch occupies residues 331–335; the sequence is GFSMF. Residues 356–359 form a G3 region; sequence DTPG. Residues 356 to 360 and 427 to 430 each bind GTP; these read DTPGS and NKAD. Residues 427–430 are G4; sequence NKAD. The G5 stretch occupies residues 467 to 469; that stretch reads SGL.

The protein belongs to the TRAFAC class translation factor GTPase superfamily. Classic translation factor GTPase family. As to quaternary structure, interacts with the exosome and with the SKI complex composed of at least SKI2, SKI3 and SKI8. Interacts directly with SKI3 and SKI8.

The protein resides in the cytoplasm. Functionally, represses the expression of non-poly(A) mRNAs like L-A or M viruses and is therefore involved in antiviral system. Mediates interactions via its N-terminus between the exosome and the SKI complex which operate in the 3'-to-5' mRNA-decay pathway. By interacting with NAM7, is also required for nonsense-mediated 3'-to-5' mRNA-decay (NMD). May recognize a stalled 80S ribosome at the 3'-end of a nonstop mRNA which leads to the recruitment of the exosome and SKI complexes to the mRNAs to be degraded. The protein is Superkiller protein 7 (SKI7) of Saccharomyces cerevisiae (strain ATCC 204508 / S288c) (Baker's yeast).